Here is an 861-residue protein sequence, read N- to C-terminus: Probable beta-glucosidase A (861 aa).

Positions 1–19 are cleaved as a signal peptide; that stretch reads MKLGWIEVAALAAASVVSA. N-linked (GlcNAc...) asparagine glycosylation is found at Asn62, Asn212, and Asn253. The active site involves Asp281. 10 N-linked (GlcNAc...) asparagine glycosylation sites follow: Asn316, Asn323, Asn355, Asn443, Asn524, Asn543, Asn565, Asn669, Asn713, and Asn846.

It belongs to the glycosyl hydrolase 3 family.

It localises to the secreted. The catalysed reaction is Hydrolysis of terminal, non-reducing beta-D-glucosyl residues with release of beta-D-glucose.. Its pathway is glycan metabolism; cellulose degradation. Beta-glucosidases are one of a number of cellulolytic enzymes involved in the degradation of cellulosic biomass. Catalyzes the last step releasing glucose from the inhibitory cellobiose. The chain is Probable beta-glucosidase A (bglA) from Aspergillus flavus (strain ATCC 200026 / FGSC A1120 / IAM 13836 / NRRL 3357 / JCM 12722 / SRRC 167).